The following is a 478-amino-acid chain: Cytochrome c-552 (478 aa).

The N-terminal stretch at 1–26 (MARKTLRARRFFSLIFPFFFITSVYA) is a signal peptide. His94 serves as a coordination point for heme c. 3 residues coordinate heme: Cys122, Cys125, and Lys126. Cys160, Cys163, His164, Cys209, Cys212, and His213 together coordinate heme c. Ca(2+)-binding residues include Glu215, Tyr216, Lys261, and Gln263. Tyr216 serves as a coordination point for substrate. His264 lines the substrate pocket. Residues His275, Cys282, Cys285, His286, His301, Cys314, Cys317, His318, and His393 each contribute to the heme c site.

This sequence belongs to the cytochrome c-552 family. Ca(2+) serves as cofactor. It depends on heme c as a cofactor.

It is found in the periplasm. It carries out the reaction 6 Fe(III)-[cytochrome c] + NH4(+) + 2 H2O = 6 Fe(II)-[cytochrome c] + nitrite + 8 H(+). The protein operates within nitrogen metabolism; nitrate reduction (assimilation). In terms of biological role, catalyzes the reduction of nitrite to ammonia, consuming six electrons in the process. The sequence is that of Cytochrome c-552 from Salmonella paratyphi C (strain RKS4594).